The primary structure comprises 523 residues: GMP synthase [glutamine-hydrolyzing] (523 aa).

Residues 9 to 198 (PVLVVDFGAQ…LTEIAGLEQN (190 aa)) enclose the Glutamine amidotransferase type-1 domain. The active-site Nucleophile is C86. Residues H172 and E174 contribute to the active site. The GMPS ATP-PPase domain occupies 199 to 397 (WTAANIAEEL…LGLPEEIVGR (199 aa)). ATP is bound at residue 227–233 (SGGVDSA).

As to quaternary structure, homodimer.

It catalyses the reaction XMP + L-glutamine + ATP + H2O = GMP + L-glutamate + AMP + diphosphate + 2 H(+). It functions in the pathway purine metabolism; GMP biosynthesis; GMP from XMP (L-Gln route): step 1/1. Catalyzes the synthesis of GMP from XMP. In Corynebacterium glutamicum (strain ATCC 13032 / DSM 20300 / JCM 1318 / BCRC 11384 / CCUG 27702 / LMG 3730 / NBRC 12168 / NCIMB 10025 / NRRL B-2784 / 534), this protein is GMP synthase [glutamine-hydrolyzing].